Consider the following 190-residue polypeptide: Threonylcarbamoyl-AMP synthase (190 aa).

Residues 7 to 190 (NFVLADIVRA…ALTGKRFRQG (184 aa)) enclose the YrdC-like domain.

The protein belongs to the SUA5 family. TsaC subfamily.

It localises to the cytoplasm. It carries out the reaction L-threonine + hydrogencarbonate + ATP = L-threonylcarbamoyladenylate + diphosphate + H2O. Its function is as follows. Required for the formation of a threonylcarbamoyl group on adenosine at position 37 (t(6)A37) in tRNAs that read codons beginning with adenine. Catalyzes the conversion of L-threonine, HCO(3)(-)/CO(2) and ATP to give threonylcarbamoyl-AMP (TC-AMP) as the acyladenylate intermediate, with the release of diphosphate. The chain is Threonylcarbamoyl-AMP synthase from Yersinia pestis bv. Antiqua (strain Angola).